The sequence spans 559 residues: Urocanate hydratase (559 aa).

Residues 53–54 (GG), Gln-131, 177–179 (GMG), Glu-197, Arg-202, 243–244 (NA), 264–268 (QTSAH), 274–275 (YL), and Tyr-323 each bind NAD(+). Residue Cys-411 is part of the active site. Gly-493 is a binding site for NAD(+).

It belongs to the urocanase family. Requires NAD(+) as cofactor.

The protein localises to the cytoplasm. It catalyses the reaction 4-imidazolone-5-propanoate = trans-urocanate + H2O. It functions in the pathway amino-acid degradation; L-histidine degradation into L-glutamate; N-formimidoyl-L-glutamate from L-histidine: step 2/3. Catalyzes the conversion of urocanate to 4-imidazolone-5-propionate. The chain is Urocanate hydratase from Pseudomonas aeruginosa (strain LESB58).